Here is a 200-residue protein sequence, read N- to C-terminus: MSEALNDLAAYVKEARGSLVVSADIAYGELTLNTTPENVIALLTFLRDDVQCGFVNIIDICGVDWPQREKRFDVVYHLLSPRQNLRVRIKLQVAEDEGVPSSTPVYMGAEWFEREAWDMYGIPFEGHKDLRRILTDYGFEGHPLRKDFPVTGFVEVRYDDVLKRVLYEPVELKQEFRNFDFLSPWEGTEYVLPGDEKAKQ.

This sequence belongs to the complex I 30 kDa subunit family. As to quaternary structure, NDH-1 is composed of 14 different subunits. Subunits NuoB, C, D, E, F, and G constitute the peripheral sector of the complex.

The protein resides in the cell inner membrane. It catalyses the reaction a quinone + NADH + 5 H(+)(in) = a quinol + NAD(+) + 4 H(+)(out). In terms of biological role, NDH-1 shuttles electrons from NADH, via FMN and iron-sulfur (Fe-S) centers, to quinones in the respiratory chain. The immediate electron acceptor for the enzyme in this species is believed to be ubiquinone. Couples the redox reaction to proton translocation (for every two electrons transferred, four hydrogen ions are translocated across the cytoplasmic membrane), and thus conserves the redox energy in a proton gradient. This chain is NADH-quinone oxidoreductase subunit C, found in Agrobacterium fabrum (strain C58 / ATCC 33970) (Agrobacterium tumefaciens (strain C58)).